The primary structure comprises 581 residues: Adenine deaminase (581 aa).

Belongs to the metallo-dependent hydrolases superfamily. Adenine deaminase family. Mn(2+) is required as a cofactor.

It catalyses the reaction adenine + H2O + H(+) = hypoxanthine + NH4(+). This chain is Adenine deaminase, found in Clostridium botulinum (strain Eklund 17B / Type B).